A 212-amino-acid polypeptide reads, in one-letter code: Thymidylate kinase (212 aa).

An ATP-binding site is contributed by 11–18 (GPEGAGKT).

It belongs to the thymidylate kinase family.

The catalysed reaction is dTMP + ATP = dTDP + ADP. In terms of biological role, phosphorylation of dTMP to form dTDP in both de novo and salvage pathways of dTTP synthesis. In Streptococcus pneumoniae (strain ATCC 700669 / Spain 23F-1), this protein is Thymidylate kinase.